The following is a 953-amino-acid chain: Ubiquitin carboxyl-terminal hydrolase CYLD (953 aa).

The tract at residues 106-590 (CEERLSLFRN…LEIMIGKKKG (485 aa)) is interaction with TRIP. 2 consecutive CAP-Gly domains span residues 153 to 198 (LAER…VFVA) and 253 to 286 (DVLPGKESLGYFVGVDMDNPIGNWDGRFDGVQLC). A disordered region spans residues 318 to 350 (FMSRGVGDKGSSSHNKPKVTGSTSDPGSRNRSE). Residues 327-346 (GSSSHNKPKVTGSTSDPGSR) show a composition bias toward polar residues. S384 is subject to Phosphoserine. The segment at 387–410 (EMSSDFGHSSPPPQPPSMNSLSSE) is disordered. An interaction with TRAF2 region spans residues 391 to 466 (DFGHSSPPPQ…MPSSSGNAHG (76 aa)). S415 and S419 each carry phosphoserine. Residues 467–681 (LEVGSLAEVK…FTSEEKDPEE (215 aa)) are interaction with IKBKG/NEMO. The CAP-Gly 3 domain maps to 489 to 532 (GQPPGLSDVLAGLELEDECAGCTDGTFRGTRYFTCALKKALFVK). The 359-residue stretch at 589 to 947 (KGIQGHYNSC…DAYMCMYQSP (359 aa)) folds into the USP domain. The active-site Nucleophile is the C598. The tract at residues 778–830 (LEDTPRQCRICGGLAMYECRECYDDPDISAGKIKQFCKTCSTQVHLHPRRLNH) is B-box. Zn(2+)-binding residues include C785, C788, C796, C799, C814, C817, H822, and H830. H868 serves as the catalytic Proton acceptor.

The protein belongs to the peptidase C19 family. Interacts (via CAP-Gly domain) with IKBKG/NEMO (via proline-rich C-terminal region). Interacts with TRAF2 and TRIP. Interacts with PLK1, DVL1, DVL3, MAVS, TBK1, IKKE and RIGI. Interacts (via CAP-Gly domain) with microtubules. Interacts with HDAC6 and BCL3. Interacts with MAP3K7. Identified in a complex with TRAF6 and SQSTM1. Interacts with OPTN and SQSTM1. Interacts with CEP350. Interacts with RNF31; the interaction is indirect and is mediated via SPATA2. Interacts with SPATA2 (via the PUB domain); the interaction is direct and recruits CYLD to the LUBAC complex, thereby regulating TNF-alpha-induced necroptosis. Post-translationally, phosphorylated on several serine residues by IKKA and/or IKKB in response to immune stimuli. Phosphorylation requires IKBKG. Phosphorylation abolishes TRAF2 deubiquitination, interferes with the activation of Jun kinases, and strongly reduces CD40-dependent gene activation by NF-kappa-B. Ubiquitinated. Polyubiquitinated in hepatocytes treated with palmitic acid. Ubiquitination is mediated by E3 ligase TRIM47 and leads to proteasomal degradation.

Its subcellular location is the cytoplasm. It localises to the perinuclear region. The protein resides in the cytoskeleton. The protein localises to the cell membrane. It is found in the microtubule organizing center. Its subcellular location is the centrosome. It localises to the spindle. The protein resides in the cilium basal body. It carries out the reaction Thiol-dependent hydrolysis of ester, thioester, amide, peptide and isopeptide bonds formed by the C-terminal Gly of ubiquitin (a 76-residue protein attached to proteins as an intracellular targeting signal).. Deubiquitinase that specifically cleaves 'Lys-63'- and linear 'Met-1'-linked polyubiquitin chains and is involved in NF-kappa-B activation and TNF-alpha-induced necroptosis. Negatively regulates NF-kappa-B activation by deubiquitinating upstream signaling factors. Contributes to the regulation of cell survival, proliferation and differentiation via its effects on NF-kappa-B activation. Negative regulator of Wnt signaling. Inhibits HDAC6 and thereby promotes acetylation of alpha-tubulin and stabilization of microtubules. Plays a role in the regulation of microtubule dynamics, and thereby contributes to the regulation of cell proliferation, cell polarization, cell migration, and angiogenesis. Required for normal cell cycle progress and normal cytokinesis. Inhibits nuclear translocation of NF-kappa-B. Plays a role in the regulation of inflammation and the innate immune response, via its effects on NF-kappa-B activation. Dispensable for the maturation of intrathymic natural killer cells, but required for the continued survival of immature natural killer cells. Negatively regulates TNFRSF11A signaling and osteoclastogenesis. Involved in the regulation of ciliogenesis, allowing ciliary basal bodies to migrate and dock to the plasma membrane; this process does not depend on NF-kappa-B activation. Ability to remove linear ('Met-1'-linked) polyubiquitin chains regulates innate immunity and TNF-alpha-induced necroptosis: recruited to the LUBAC complex via interaction with SPATA2 and restricts linear polyubiquitin formation on target proteins. Regulates innate immunity by restricting linear polyubiquitin formation on RIPK2 in response to NOD2 stimulation. Involved in TNF-alpha-induced necroptosis by removing linear ('Met-1'-linked) polyubiquitin chains from RIPK1, thereby regulating the kinase activity of RIPK1. Negatively regulates intestinal inflammation by removing 'Lys-63' linked polyubiquitin chain of NLRP6, thereby reducing the interaction between NLRP6 and PYCARD/ASC and formation of the NLRP6 inflammasome. Does not catalyze deubiquitination of heterotypic 'Lys-63'-/'Lys-48'-linked branched ubiquitin chains. Removes 'Lys-63' linked polyubiquitin chain of MAP3K7, which inhibits phosphorylation and blocks downstream activation of the JNK-p38 kinase cascades. Also removes 'Lys-63'-linked polyubiquitin chains of MAP3K1 and MA3P3K3, which inhibit their interaction with MAP2K1 and MAP2K2. This is Ubiquitin carboxyl-terminal hydrolase CYLD (Cyld) from Rattus norvegicus (Rat).